The primary structure comprises 108 residues: Nucleoid-associated protein PSHAa1202 (108 aa).

2 disordered regions span residues 1–20 (MFKGGMGNMMKQAQQMQDRM) and 87–108 (TQERMGKVTGGMQLPPGMKMPF).

The protein belongs to the YbaB/EbfC family. In terms of assembly, homodimer.

It localises to the cytoplasm. It is found in the nucleoid. Binds to DNA and alters its conformation. May be involved in regulation of gene expression, nucleoid organization and DNA protection. In Pseudoalteromonas translucida (strain TAC 125), this protein is Nucleoid-associated protein PSHAa1202.